The primary structure comprises 167 residues: Translation initiation factor IF-3 (167 aa).

Belongs to the IF-3 family. Monomer.

It is found in the cytoplasm. Functionally, IF-3 binds to the 30S ribosomal subunit and shifts the equilibrium between 70S ribosomes and their 50S and 30S subunits in favor of the free subunits, thus enhancing the availability of 30S subunits on which protein synthesis initiation begins. The sequence is that of Translation initiation factor IF-3 from Shouchella clausii (strain KSM-K16) (Alkalihalobacillus clausii).